The primary structure comprises 98 residues: NADH-ubiquinone oxidoreductase chain 4L (98 aa).

Helical transmembrane passes span 2–22, 26–46, and 61–81; these read TLVMFNITIAFTLSLLGTLMF, LMSTLLCLEGMMLCLFIMAVI, and IIILVFAACEAAVGLALLAMV.

It belongs to the complex I subunit 4L family. In terms of assembly, core subunit of respiratory chain NADH dehydrogenase (Complex I) which is composed of 45 different subunits.

It localises to the mitochondrion inner membrane. It catalyses the reaction a ubiquinone + NADH + 5 H(+)(in) = a ubiquinol + NAD(+) + 4 H(+)(out). Its function is as follows. Core subunit of the mitochondrial membrane respiratory chain NADH dehydrogenase (Complex I) which catalyzes electron transfer from NADH through the respiratory chain, using ubiquinone as an electron acceptor. Part of the enzyme membrane arm which is embedded in the lipid bilayer and involved in proton translocation. The polypeptide is NADH-ubiquinone oxidoreductase chain 4L (MT-ND4L) (Nyctomys sumichrasti (Sumichrast's vesper rat)).